The chain runs to 457 residues: Argininosuccinate lyase (457 aa).

This sequence belongs to the lyase 1 family. Argininosuccinate lyase subfamily.

It is found in the cytoplasm. It carries out the reaction 2-(N(omega)-L-arginino)succinate = fumarate + L-arginine. Its pathway is amino-acid biosynthesis; L-arginine biosynthesis; L-arginine from L-ornithine and carbamoyl phosphate: step 3/3. The chain is Argininosuccinate lyase from Pectobacterium carotovorum subsp. carotovorum (strain PC1).